We begin with the raw amino-acid sequence, 617 residues long: Zinc finger protein 613 (617 aa).

One can recognise a KRAB domain in the interval 8 to 78; sequence LTLEDVAVEF…ENEIHSQICP (71 aa). 12 consecutive C2H2-type zinc fingers follow at residues 204 to 226, 232 to 254, 260 to 282, 288 to 310, 316 to 338, 344 to 366, 372 to 394, 400 to 422, 428 to 450, 456 to 478, 484 to 506, and 512 to 535; these read HVCT…QRVH, HGCS…QRNH, YECT…QKIH, YICS…QRVH, HGCS…QRTH, YECT…QKAH, YICR…QRIH, YICN…RRTH, YVCN…QRFH, FVCT…QRIH, YTCS…RRTH, and YGCS…GMLH.

Belongs to the krueppel C2H2-type zinc-finger protein family.

It localises to the nucleus. In terms of biological role, may be involved in transcriptional regulation. This Homo sapiens (Human) protein is Zinc finger protein 613 (ZNF613).